Here is a 357-residue protein sequence, read N- to C-terminus: tRNA-specific 2-thiouridylase MnmA (357 aa).

Residues 7 to 14 (AMSGGVDS) and Met33 each bind ATP. The active-site Nucleophile is Cys101. Cys101 and Cys198 are disulfide-bonded. An ATP-binding site is contributed by Gly125. The segment at 148-150 (KDQ) is interaction with tRNA. The Cysteine persulfide intermediate role is filled by Cys198.

Belongs to the MnmA/TRMU family.

The protein resides in the cytoplasm. It catalyses the reaction S-sulfanyl-L-cysteinyl-[protein] + uridine(34) in tRNA + AH2 + ATP = 2-thiouridine(34) in tRNA + L-cysteinyl-[protein] + A + AMP + diphosphate + H(+). Catalyzes the 2-thiolation of uridine at the wobble position (U34) of tRNA, leading to the formation of s(2)U34. The chain is tRNA-specific 2-thiouridylase MnmA from Herpetosiphon aurantiacus (strain ATCC 23779 / DSM 785 / 114-95).